The primary structure comprises 939 residues: Phosphoenolpyruvate carboxylase (939 aa).

Residues H151 and K593 contribute to the active site.

The protein belongs to the PEPCase type 1 family. Requires Mg(2+) as cofactor.

The catalysed reaction is oxaloacetate + phosphate = phosphoenolpyruvate + hydrogencarbonate. Forms oxaloacetate, a four-carbon dicarboxylic acid source for the tricarboxylic acid cycle. This is Phosphoenolpyruvate carboxylase from Gloeobacter violaceus (strain ATCC 29082 / PCC 7421).